Reading from the N-terminus, the 72-residue chain is Cytochrome c oxidase subunit 8C, mitochondrial (72 aa).

The N-terminal 29 residues, 1-29, are a transit peptide targeting the mitochondrion; it reads MSRLLLLCSSLLRHRAVLFSKPGHPGRLS. The Mitochondrial matrix segment spans residues 30–40; it reads HSESPQKKILS. A helical transmembrane segment spans residues 41–64; that stretch reads PTESAVGIVVFFTTFYIPAAYVLS. Residues 65–72 are Mitochondrial intermembrane-facing; the sequence is SLKYFKGE.

The protein belongs to the cytochrome c oxidase VIII family. As to quaternary structure, component of the cytochrome c oxidase (complex IV, CIV), a multisubunit enzyme composed of 14 subunits. The complex is composed of a catalytic core of 3 subunits MT-CO1, MT-CO2 and MT-CO3, encoded in the mitochondrial DNA, and 11 supernumerary subunits COX4I, COX5A, COX5B, COX6A, COX6B, COX6C, COX7A, COX7B, COX7C, COX8 and NDUFA4, which are encoded in the nuclear genome. The complex exists as a monomer or a dimer and forms supercomplexes (SCs) in the inner mitochondrial membrane with NADH-ubiquinone oxidoreductase (complex I, CI) and ubiquinol-cytochrome c oxidoreductase (cytochrome b-c1 complex, complex III, CIII), resulting in different assemblies (supercomplex SCI(1)III(2)IV(1) and megacomplex MCI(2)III(2)IV(2)).

The protein resides in the mitochondrion inner membrane. It functions in the pathway energy metabolism; oxidative phosphorylation. Functionally, component of the cytochrome c oxidase, the last enzyme in the mitochondrial electron transport chain which drives oxidative phosphorylation. The respiratory chain contains 3 multisubunit complexes succinate dehydrogenase (complex II, CII), ubiquinol-cytochrome c oxidoreductase (cytochrome b-c1 complex, complex III, CIII) and cytochrome c oxidase (complex IV, CIV), that cooperate to transfer electrons derived from NADH and succinate to molecular oxygen, creating an electrochemical gradient over the inner membrane that drives transmembrane transport and the ATP synthase. Cytochrome c oxidase is the component of the respiratory chain that catalyzes the reduction of oxygen to water. Electrons originating from reduced cytochrome c in the intermembrane space (IMS) are transferred via the dinuclear copper A center (CU(A)) of subunit 2 and heme A of subunit 1 to the active site in subunit 1, a binuclear center (BNC) formed by heme A3 and copper B (CU(B)). The BNC reduces molecular oxygen to 2 water molecules using 4 electrons from cytochrome c in the IMS and 4 protons from the mitochondrial matrix. This chain is Cytochrome c oxidase subunit 8C, mitochondrial (Cox8c), found in Mus musculus (Mouse).